The sequence spans 525 residues: GMP synthase [glutamine-hydrolyzing] (525 aa).

The Glutamine amidotransferase type-1 domain maps to 9–207 (RILILDFGSQ…VLDICQCEKL (199 aa)). Cys86 functions as the Nucleophile in the catalytic mechanism. Active-site residues include His181 and Glu183. A GMPS ATP-PPase domain is found at 208-400 (WTPDAIIEDA…LGLPYDMLYR (193 aa)). An ATP-binding site is contributed by 235 to 241 (SGGVDSS).

As to quaternary structure, homodimer.

The enzyme catalyses XMP + L-glutamine + ATP + H2O = GMP + L-glutamate + AMP + diphosphate + 2 H(+). Its pathway is purine metabolism; GMP biosynthesis; GMP from XMP (L-Gln route): step 1/1. Functionally, catalyzes the synthesis of GMP from XMP. The sequence is that of GMP synthase [glutamine-hydrolyzing] from Pseudoalteromonas atlantica (strain T6c / ATCC BAA-1087).